The following is a 1218-amino-acid chain: NACHT, LRR and PYD domains-containing protein 1a allele 1 (1218 aa).

Positions 1 to 61 are disordered; sequence MEESQSKQES…SLPGWSSTSN (61 aa). Residues 7–29 are compositionally biased toward polar residues; sequence KQESNTRVAQHGSQQDVDPTFQT. Residues 175–484 form the NACHT domain; it reads QLVIIEGAAG…EFFAAMSYIL (310 aa). 181-188 lines the ATP pocket; that stretch reads GAAGIGKS. LRR repeat units lie at residues 343–364, 673–693, and 730–750; these read KERN…LTLC, NLEE…RSLC, and RLAE…RQLC. Polar residues predominate over residues 799–815; sequence TMPTENTDGEESLTSSK. A disordered region spans residues 799-842; that stretch reads TMPTENTDGEESLTSSKQQQQQSGDKHMEPLGTDDDFWGPSGPV. The tract at residues 835–968 is ZU5; sequence FWGPSGPVST…HFAVLENPSF (134 aa). Residues 835-1118 form the FIIND domain; it reads FWGPSGPVST…LRPALPRMAS (284 aa). The tract at residues 969-1118 is UPA; sequence SPMGVLLRMI…LRPALPRMAS (150 aa). Positions 1122-1211 constitute a CARD domain; the sequence is DAPALLHFVD…HLIMDLLEKS (90 aa).

This sequence belongs to the NLRP family. In terms of assembly, interacts (via LRR repeats) with BCL2 and BCL2L1 (via the loop between motifs BH4 and BH3). Interacts with NOD2; this interaction is enhanced in the presence of muramyl dipeptide (MDP) and increases IL1B release. Interacts with EIF2AK2/PKR; this interaction requires EIF2AK2 activity, is accompanied by EIF2AK2 autophosphorylation and promotes inflammasome assembly in response to danger-associated signals. Interacts with MEFV; this interaction targets Nlrp1a to degradation by autophagy, hence preventing excessive IL1B- and IL18-mediated inflammation. Interacts with DPP9; leading to inhibit activation of the inflammasome. DPP9 acts via formation of a ternary complex, composed of a DPP9 homodimer, one full-length NLRP1 protein, and one cleaved C-terminus of Nlrp1a (NACHT, LRR and PYD domains-containing protein 1a, C-terminus). Interacts with DPP8; leading to inhibit activation of the inflammasome, probably via formation of a ternary complex with DPP8. As to quaternary structure, interacts with the C-terminal part of Nlrp1a (NACHT, LRR and PYD domains-containing protein 1a, C-terminus) in absence of pathogens and other damage-associated signals. Interacts with the N-terminal part of Nlrp1a (NACHT, LRR and PYD domains-containing protein 1a, N-terminus) in absence of pathogens and other damage-associated signals. Homomultimer; forms the Nlrp1a inflammasome polymeric complex, a filament composed of homopolymers of this form in response to pathogens and other damage-associated signals. The Nlrp1a inflammasome polymeric complex directly recruits pro-caspase-1 (proCASP1) independently of PYCARD/ASC. Interacts (via CARD domain) with CASP1 (via CARD domain); leading to CASP1 activation. In terms of processing, autocatalytically cleaved. Autocatalytic cleavage in FIIND region occurs constitutively, prior to activation signals, and is required for inflammasome activity (IL1B release), possibly by facilitating CASP1 binding. Both N- and C-terminal parts remain associated non-covalently. (Microbial infection) Cleavage by B.anthracis lethal toxin (LT) endopeptidase promotes ubiquitination and degradation of the N-terminal part, releasing the cleaved C-terminal part of the protein (NACHT, LRR and PYD domains-containing protein 1a, C-terminus), which polymerizes and forms the Nlrp1a inflammasome. Post-translationally, ubiquitinated in response to pathogen-associated signals, leading to its degradation by the proteasome and subsequent release of the cleaved C-terminal part of the protein (NACHT, LRR and PYD domains-containing protein 1a, C-terminus), which polymerizes and forms the Nlrp1a inflammasome.

Its subcellular location is the cytoplasm. It localises to the cytosol. The protein localises to the nucleus. It is found in the inflammasome. Its activity is regulated as follows. Activated by cleavage by B.anthracis lethal toxin (LT) endopeptidase. Cleavage by LT promotes ubiquitination and degradation of the N-terminal part, releasing the cleaved C-terminal part of the protein (NACHT, LRR and PYD domains-containing protein 1a, C-terminus), which polymerizes and forms the Nlrp1a inflammasome. Nlrp1a inflammasome is inhibited by DPP8 and DPP9, which sequester the C-terminal fragment of Nlrp1a (NACHT, LRR and PYD domains-containing protein 1a, C-terminus) in a ternary complex, thereby preventing Nlrp1a oligomerization and activation. Nlrp1a inflammasome is weakly activated by Val-boroPro (Talabostat, PT-100), an inhibitor of dipeptidyl peptidases DPP8 and DPP9. Val-boroPro relieves inhibition of DPP8 and/or DPP9 by promoting disruption of the ternary complex, releasing its C-terminal part from autoinhibition. Weakly activated by Toxoplasma gondii. In terms of biological role, acts as the sensor component of the Nlrp1a inflammasome, which mediates inflammasome activation in response to various pathogen-associated signals, leading to subsequent pyroptosis. Inflammasomes are supramolecular complexes that assemble in the cytosol in response to pathogens and other damage-associated signals and play critical roles in innate immunity and inflammation. Acts as a recognition receptor (PRR): recognizes specific pathogens and other damage-associated signals, such as B.anthracis lethal toxin (LT) or Val-boroPro inhibitor, and mediates the formation of the inflammasome polymeric complex. In response to pathogen-associated signals, the N-terminal part of Nlrp1a is degraded by the proteasome, releasing the cleaved C-terminal part of the protein (NACHT, LRR and PYD domains-containing protein 1a, C-terminus), which polymerizes to initiate the formation of the inflammasome complex: the inflammasome directly recruits pro-caspase-1 (proCASP1) independently of PYCARD/ASC and promotes caspase-1 (CASP1) activation, which subsequently cleaves and activates inflammatory cytokines IL1B and IL18 and gasdermin-D (GSDMD), leading to pyroptosis. In the absence of GSDMD expression, the Nlrp1a inflammasome is able to recruit and activate CASP8, leading to activation of gasdermin-E (GSDME). Functionally, constitutes the precursor of the Nlrp1a inflammasome, which mediates autoproteolytic processing within the FIIND domain to generate the N-terminal and C-terminal parts, which are associated non-covalently in absence of pathogens and other damage-associated signals. Its function is as follows. Regulatory part that prevents formation of the Nlrp1a inflammasome: in absence of pathogens and other damage-associated signals, interacts with the C-terminal part of Nlrp1a (NACHT, LRR and PYD domains-containing protein 1a, C-terminus), preventing activation of the Nlrp1a inflammasome. In response to pathogen-associated signals, this part is ubiquitinated by the N-end rule pathway and degraded by the proteasome, releasing the cleaved C-terminal part of the protein, which polymerizes and forms the Nlrp1a inflammasome. Constitutes the active part of the Nlrp1a inflammasome. In absence of pathogens and other damage-associated signals, interacts with the N-terminal part of Nlrp1a (NACHT, LRR and PYD domains-containing protein 1a, N-terminus), preventing activation of the Nlrp1a inflammasome. In response to pathogen-associated signals, the N-terminal part of Nlrp1a is degraded by the proteasome, releasing this form, which polymerizes to form the Nlrp1a inflammasome complex: the Nlrp1a inflammasome complex then directly recruits pro-caspase-1 (proCASP1) and promotes caspase-1 (CASP1) activation, leading to gasdermin-D (GSDMD) cleavage and subsequent pyroptosis. The sequence is that of NACHT, LRR and PYD domains-containing protein 1a allele 1 from Rattus norvegicus (Rat).